Reading from the N-terminus, the 29-residue chain is Cycloviolacin-O16 (29 aa).

The cyclopeptide (Gly-Asn) cross-link spans 1–29 (GLPCGETCFTGKCYTPGCSCSYPICKKIN). Disulfide bonds link cysteine 4–cysteine 18, cysteine 8–cysteine 20, and cysteine 13–cysteine 25.

In terms of processing, this is a cyclic peptide.

Probably participates in a plant defense mechanism. In Viola odorata (Sweet violet), this protein is Cycloviolacin-O16.